Consider the following 472-residue polypeptide: Adenosylhomocysteinase (472 aa).

3 residues coordinate substrate: Thr60, Asp136, and Glu197. An NAD(+)-binding site is contributed by Thr198 to Thr200. Substrate-binding residues include Lys227 and Asp231. Residues Asn232, Gly261–Gly266, Glu284, Asn319, Ile340–His342, and Asn388 each bind NAD(+).

It belongs to the adenosylhomocysteinase family. Requires NAD(+) as cofactor.

The protein resides in the cytoplasm. The enzyme catalyses S-adenosyl-L-homocysteine + H2O = L-homocysteine + adenosine. It participates in amino-acid biosynthesis; L-homocysteine biosynthesis; L-homocysteine from S-adenosyl-L-homocysteine: step 1/1. May play a key role in the regulation of the intracellular concentration of adenosylhomocysteine. The sequence is that of Adenosylhomocysteinase from Maridesulfovibrio salexigens (strain ATCC 14822 / DSM 2638 / NCIMB 8403 / VKM B-1763) (Desulfovibrio salexigens).